The sequence spans 306 residues: MGGARDVGWVAAGLVLGAGACYCIYRLTRGPRRGGRRLRPSRSAEDLTDGSYDDILNAEQLKKLLYLLESTDDPVITEKALVTLGNNAAFSTNQAIIRELGGIPIVGNKINSLNQSIKEKALNALNNLSVNVENQTKIKIYVPQVCEDVFADPLNSAVQLAGLRLLTNMTVTNDYQHLLSGSVAGLFHLLLLGNGSTKVQVLKLLLNLSENPAMTEGLLSVQVDSSFLSLYDGQVANEILLRALTLFQNINNCLKVEGRLANQIPFAKGSLFFLLYGEECAQKMRALACHHDVDVKEKALAIKPKF.

The chain crosses the membrane as a helical span at residues 7-29; the sequence is VGWVAAGLVLGAGACYCIYRLTR. Ser-43 is subject to Phosphoserine. Thr-48 is subject to Phosphothreonine. Residues 101–143 form an ARM repeat; the sequence is GGIPIVGNKINSLNQSIKEKALNALNNLSVNVENQTKIKIYVP.

In terms of assembly, interacts with the DNA-binding domain of p53/TP53.

The protein localises to the endoplasmic reticulum membrane. Its subcellular location is the mitochondrion outer membrane. Its function is as follows. May play a role in cell survival and cell growth. May suppress the transcriptional activity of p53/TP53. In Mus musculus (Mouse), this protein is Armadillo repeat-containing protein 10 (Armc10).